A 366-amino-acid chain; its full sequence is ATP-dependent 6-phosphofructokinase (366 aa).

ATP contacts are provided by residues G16, 78–79 (RE), and 118–121 (GNGT). The interval 74-94 (LGTSREKPFKPDPGEKDSEAG) is disordered. The segment covering 77–94 (SREKPFKPDPGEKDSEAG) has biased composition (basic and acidic residues). Residue N119 coordinates Mg(2+). Substrate contacts are provided by residues 141 to 143 (TID), R178, 185 to 187 (MGH), E238, R282, and 288 to 291 (YLQR). D143 (proton acceptor) is an active-site residue.

It belongs to the phosphofructokinase type A (PFKA) family. Mixed-substrate PFK group III subfamily. In terms of assembly, homodimer or homotetramer. It depends on Mg(2+) as a cofactor.

The protein localises to the cytoplasm. The catalysed reaction is beta-D-fructose 6-phosphate + ATP = beta-D-fructose 1,6-bisphosphate + ADP + H(+). The protein operates within carbohydrate degradation; glycolysis; D-glyceraldehyde 3-phosphate and glycerone phosphate from D-glucose: step 3/4. Functionally, catalyzes the phosphorylation of D-fructose 6-phosphate to fructose 1,6-bisphosphate by ATP, the first committing step of glycolysis. This is ATP-dependent 6-phosphofructokinase from Spirochaeta thermophila (strain ATCC 49972 / DSM 6192 / RI 19.B1).